The sequence spans 119 residues: Basic phospholipase A2 notexin (119 aa).

Disulfide bonds link cysteine 11–cysteine 71, cysteine 27–cysteine 118, cysteine 29–cysteine 45, cysteine 44–cysteine 99, cysteine 51–cysteine 92, cysteine 60–cysteine 85, and cysteine 78–cysteine 90. Residues tyrosine 28, glycine 30, and glycine 32 each contribute to the Ca(2+) site. Residue histidine 48 is part of the active site. Aspartate 49 serves as a coordination point for Ca(2+). Residue aspartate 93 is part of the active site.

The protein belongs to the phospholipase A2 family. Group I subfamily. D49 sub-subfamily. Monomer. The cofactor is Ca(2+). In terms of tissue distribution, expressed by the venom gland.

It is found in the secreted. The catalysed reaction is a 1,2-diacyl-sn-glycero-3-phosphocholine + H2O = a 1-acyl-sn-glycero-3-phosphocholine + a fatty acid + H(+). In terms of biological role, snake venom phospholipase A2 (PLA2) that inhibits neuromuscular transmission by blocking acetylcholine release from the nerve termini. Is directly toxic to skeletal muscle upon local application in vivo (dystrophic effect). Also has direct nephrotoxicity in experimental mice; a single subcutaneous dose (1.38 ug/kg) produces renal tubular and glomerular damage within 24 hours. PLA2 catalyzes the calcium-dependent hydrolysis of the 2-acyl groups in 3-sn-phosphoglycerides. The polypeptide is Basic phospholipase A2 notexin (Notechis scutatus scutatus (Mainland tiger snake)).